The primary structure comprises 82 residues: Small ribosomal subunit protein bS16 (82 aa).

This sequence belongs to the bacterial ribosomal protein bS16 family.

In Pectobacterium atrosepticum (strain SCRI 1043 / ATCC BAA-672) (Erwinia carotovora subsp. atroseptica), this protein is Small ribosomal subunit protein bS16.